Consider the following 120-residue polypeptide: Large ribosomal subunit protein bL12 (120 aa).

It belongs to the bacterial ribosomal protein bL12 family. Homodimer. Part of the ribosomal stalk of the 50S ribosomal subunit. Forms a multimeric L10(L12)X complex, where L10 forms an elongated spine to which 2 to 4 L12 dimers bind in a sequential fashion. Binds GTP-bound translation factors.

Forms part of the ribosomal stalk which helps the ribosome interact with GTP-bound translation factors. Is thus essential for accurate translation. The chain is Large ribosomal subunit protein bL12 from Aeromonas salmonicida (strain A449).